The following is a 302-amino-acid chain: Nucleotide-binding protein SERP0433 (302 aa).

Residue 18-25 coordinates ATP; sequence GMSGAGKS. GTP is bound at residue 69–72; sequence DLRG.

Belongs to the RapZ-like family.

Displays ATPase and GTPase activities. The sequence is that of Nucleotide-binding protein SERP0433 from Staphylococcus epidermidis (strain ATCC 35984 / DSM 28319 / BCRC 17069 / CCUG 31568 / BM 3577 / RP62A).